The sequence spans 345 residues: NADH-quinone oxidoreductase subunit H (345 aa).

The next 8 helical transmembrane spans lie at 14–34, 84–104, 115–135, 161–181, 187–207, 248–268, 277–297, and 309–329; these read IILAQVLAVVAFVMISLLFLV, FILAPMTSFVLAMIAWAVIPF, VAILYVFAVSSLEVYGVIMGG, IGLIIIGVILSTGSMNFGDIV, GWGFFGWYWLPHFPMVFLFFI, YIAIFLMCALTSLLFFGGWLS, VLWMVAKMAFFFFIFAMVKAI, and LGWKVFLPFSLVWVVFVAFAA.

Belongs to the complex I subunit 1 family. As to quaternary structure, NDH-1 is composed of 14 different subunits. Subunits NuoA, H, J, K, L, M, N constitute the membrane sector of the complex.

The protein localises to the cell inner membrane. It carries out the reaction a quinone + NADH + 5 H(+)(in) = a quinol + NAD(+) + 4 H(+)(out). Its function is as follows. NDH-1 shuttles electrons from NADH, via FMN and iron-sulfur (Fe-S) centers, to quinones in the respiratory chain. The immediate electron acceptor for the enzyme in this species is believed to be ubiquinone. Couples the redox reaction to proton translocation (for every two electrons transferred, four hydrogen ions are translocated across the cytoplasmic membrane), and thus conserves the redox energy in a proton gradient. This subunit may bind ubiquinone. The sequence is that of NADH-quinone oxidoreductase subunit H from Ruegeria pomeroyi (strain ATCC 700808 / DSM 15171 / DSS-3) (Silicibacter pomeroyi).